Consider the following 85-residue polypeptide: Large ribosomal subunit protein bL27 (85 aa).

The disordered stretch occupies residues 1 to 20; that stretch reads MAHKKAGGSTRNGRDSEAKR.

Belongs to the bacterial ribosomal protein bL27 family.

The polypeptide is Large ribosomal subunit protein bL27 (Cronobacter sakazakii (strain ATCC BAA-894) (Enterobacter sakazakii)).